The following is a 330-amino-acid chain: DNA-directed RNA polymerase subunit alpha (330 aa).

The alpha N-terminal domain (alpha-NTD) stretch occupies residues methionine 1–serine 225. The alpha C-terminal domain (alpha-CTD) stretch occupies residues valine 237–aspartate 330.

The protein belongs to the RNA polymerase alpha chain family. As to quaternary structure, homodimer. The RNAP catalytic core consists of 2 alpha, 1 beta, 1 beta' and 1 omega subunit. When a sigma factor is associated with the core the holoenzyme is formed, which can initiate transcription.

The catalysed reaction is RNA(n) + a ribonucleoside 5'-triphosphate = RNA(n+1) + diphosphate. Functionally, DNA-dependent RNA polymerase catalyzes the transcription of DNA into RNA using the four ribonucleoside triphosphates as substrates. The polypeptide is DNA-directed RNA polymerase subunit alpha (Dehalococcoides mccartyi (strain CBDB1)).